A 173-amino-acid polypeptide reads, in one-letter code: Co-chaperone protein HscB homolog (173 aa).

In terms of domain architecture, J spans 5 to 77; sequence CHFALFELQP…PKRARYLLAM (73 aa).

The protein belongs to the HscB family. In terms of assembly, interacts with HscA and stimulates its ATPase activity.

Its function is as follows. Co-chaperone involved in the maturation of iron-sulfur cluster-containing proteins. Seems to help targeting proteins to be folded toward HscA. This Pseudomonas fluorescens (strain SBW25) protein is Co-chaperone protein HscB homolog.